The following is a 637-amino-acid chain: 1-deoxy-D-xylulose-5-phosphate synthase (637 aa).

Thiamine diphosphate-binding positions include His82 and 123–125; that span reads GHA. A Mg(2+)-binding site is contributed by Asp154. Thiamine diphosphate is bound by residues 155–156, Asn183, Tyr295, and Glu378; that span reads GS. Asn183 is a binding site for Mg(2+).

Belongs to the transketolase family. DXPS subfamily. Homodimer. Mg(2+) serves as cofactor. The cofactor is thiamine diphosphate.

It catalyses the reaction D-glyceraldehyde 3-phosphate + pyruvate + H(+) = 1-deoxy-D-xylulose 5-phosphate + CO2. The protein operates within metabolic intermediate biosynthesis; 1-deoxy-D-xylulose 5-phosphate biosynthesis; 1-deoxy-D-xylulose 5-phosphate from D-glyceraldehyde 3-phosphate and pyruvate: step 1/1. Catalyzes the acyloin condensation reaction between C atoms 2 and 3 of pyruvate and glyceraldehyde 3-phosphate to yield 1-deoxy-D-xylulose-5-phosphate (DXP). This is 1-deoxy-D-xylulose-5-phosphate synthase from Lawsonia intracellularis (strain PHE/MN1-00).